An 876-amino-acid polypeptide reads, in one-letter code: Alanine--tRNA ligase (876 aa).

Zn(2+) is bound by residues H564, H568, C666, and H670.

The protein belongs to the class-II aminoacyl-tRNA synthetase family. Homotetramer. It depends on Zn(2+) as a cofactor.

The protein localises to the cytoplasm. It carries out the reaction tRNA(Ala) + L-alanine + ATP = L-alanyl-tRNA(Ala) + AMP + diphosphate. Its function is as follows. Catalyzes the attachment of alanine to tRNA(Ala) in a two-step reaction: alanine is first activated by ATP to form Ala-AMP and then transferred to the acceptor end of tRNA(Ala). Also edits incorrectly charged Ser-tRNA(Ala) and Gly-tRNA(Ala) via its editing domain. The chain is Alanine--tRNA ligase from Salmonella typhimurium (strain LT2 / SGSC1412 / ATCC 700720).